Here is a 420-residue protein sequence, read N- to C-terminus: MGQETEINKRYQVAKERYQAIGVDTEKALKTLKDIKISMHCWQGDDVKGFLNPDGELTGGIMATGNYPGAAHTPKQLRQDLEKAYSLIPGKHKLNLHAIYVDTDEKVDLNEIEPKHFTPWVEWAKEQGLGLDFNPTFFSHPMFKDNYTLASPDKEVRDFWIEHGKRSRKISEYFGKELGQTSINNFWVPDGIKDCPIDRYTPRKRLMEALDEVFAEKLDEKYTQEAVESKLFGLGAEAYTVGSHEFYMGYGITRDKLICLDAGHFHPTEVISNKLSSLALFSKGVMLHVSRPVRWDSDHVVIMDDELIEIGRELVRNDLLGITNIGLDFFDATINRIAAWVVGTRNTQKSLLKALLEPTADLKKMELENDFTSRMAITEELKDFPFGDVWNYFCEINGVPVGLDWLKEVKAYEEDVLLKR.

Mn(2+)-binding residues include His264, Asp296, and Asp298.

The protein belongs to the rhamnose isomerase family. It depends on Mn(2+) as a cofactor.

It is found in the cytoplasm. The catalysed reaction is L-rhamnopyranose = L-rhamnulose. It functions in the pathway carbohydrate degradation; L-rhamnose degradation; glycerone phosphate from L-rhamnose: step 1/3. In terms of biological role, catalyzes the interconversion of L-rhamnose and L-rhamnulose. The protein is L-rhamnose isomerase of Listeria monocytogenes serovar 1/2a (strain ATCC BAA-679 / EGD-e).